Reading from the N-terminus, the 189-residue chain is dCTP deaminase (189 aa).

DCTP-binding positions include 112-117, 136-138, Gln157, Tyr171, and Gln181; these read KSTYAR and TLE. Glu138 functions as the Proton donor/acceptor in the catalytic mechanism.

The protein belongs to the dCTP deaminase family. In terms of assembly, homotrimer.

The catalysed reaction is dCTP + H2O + H(+) = dUTP + NH4(+). It functions in the pathway pyrimidine metabolism; dUMP biosynthesis; dUMP from dCTP (dUTP route): step 1/2. Its function is as follows. Catalyzes the deamination of dCTP to dUTP. This chain is dCTP deaminase, found in Leptothrix cholodnii (strain ATCC 51168 / LMG 8142 / SP-6) (Leptothrix discophora (strain SP-6)).